The following is a 159-amino-acid chain: uncharacterized protein (159 aa).

Belongs to the mimivirus L15/L51/R83 family.

This is an uncharacterized protein from Acanthamoeba polyphaga mimivirus (APMV).